The chain runs to 65 residues: VESP-VB2 (65 aa).

The signal sequence occupies residues 1-23 (MKMSILFLFALIASLACLQLTFA). AXPX repeat units lie at residues 23 to 26 (AAPA), 27 to 30 (ASPF), 31 to 34 (ANPG), 35 to 38 (ASPE), 39 to 42 (AAPL), 43 to 46 (ADPL), and 47 to 50 (ADPF). Residues 24 to 49 (APAASPFANPGASPEAAPLADPLADP) constitute a propeptide that is removed on maturation. Leu-62 carries the post-translational modification Leucine amide.

This sequence belongs to the MCD family. Mastoparan subfamily. As to expression, expressed by the venom gland.

The protein resides in the secreted. Antimicrobial peptide. Shows activity against both Gram-positive and -negative bacteria, as well against fungi. Also promotes important mast cell degranulation. Shows little hemolytic activity on rabbit and human erythrocytes. Its mast cell degranulation activity may be related to the activation of G-protein coupled receptors in mast cells as well as interaction with other proteins located in cell endosomal membranes in the mast cells. The chain is VESP-VB2 from Vespa bicolor (Black shield wasp).